The sequence spans 137 residues: Small heat shock protein IbpA (137 aa).

One can recognise a sHSP domain in the interval 28–137; that stretch reads SQSNGGYPPY…AKKPRRIEIN (110 aa).

Belongs to the small heat shock protein (HSP20) family. Monomer. Forms homomultimers of about 100-150 subunits at optimal growth temperatures. Conformation changes to monomers at high temperatures or high ionic concentrations.

The protein localises to the cytoplasm. Associates with aggregated proteins, together with IbpB, to stabilize and protect them from irreversible denaturation and extensive proteolysis during heat shock and oxidative stress. Aggregated proteins bound to the IbpAB complex are more efficiently refolded and reactivated by the ATP-dependent chaperone systems ClpB and DnaK/DnaJ/GrpE. Its activity is ATP-independent. The sequence is that of Small heat shock protein IbpA from Shigella sonnei (strain Ss046).